A 390-amino-acid polypeptide reads, in one-letter code: Dual-specificity RNA methyltransferase RlmN (390 aa).

The active-site Proton acceptor is the Glu110. The region spanning Glu116–Asp355 is the Radical SAM core domain. A disulfide bridge links Cys123 with Cys360. 3 residues coordinate [4Fe-4S] cluster: Cys130, Cys134, and Cys137. Residues Gly184 to Glu185, Ser216, Ser238 to His240, and Asn317 each bind S-adenosyl-L-methionine. The S-methylcysteine intermediate role is filled by Cys360.

This sequence belongs to the radical SAM superfamily. RlmN family. [4Fe-4S] cluster serves as cofactor.

It localises to the cytoplasm. The catalysed reaction is adenosine(2503) in 23S rRNA + 2 reduced [2Fe-2S]-[ferredoxin] + 2 S-adenosyl-L-methionine = 2-methyladenosine(2503) in 23S rRNA + 5'-deoxyadenosine + L-methionine + 2 oxidized [2Fe-2S]-[ferredoxin] + S-adenosyl-L-homocysteine. The enzyme catalyses adenosine(37) in tRNA + 2 reduced [2Fe-2S]-[ferredoxin] + 2 S-adenosyl-L-methionine = 2-methyladenosine(37) in tRNA + 5'-deoxyadenosine + L-methionine + 2 oxidized [2Fe-2S]-[ferredoxin] + S-adenosyl-L-homocysteine. Functionally, specifically methylates position 2 of adenine 2503 in 23S rRNA and position 2 of adenine 37 in tRNAs. m2A2503 modification seems to play a crucial role in the proofreading step occurring at the peptidyl transferase center and thus would serve to optimize ribosomal fidelity. This is Dual-specificity RNA methyltransferase RlmN from Haemophilus influenzae (strain 86-028NP).